A 168-amino-acid polypeptide reads, in one-letter code: Small ribosomal subunit protein uS9 (168 aa).

The tract at residues 1–38 is disordered; that stretch reads MAKIADSIDSAQADSVENVESYSTETPESAAPAAPRPV. Positions 9–22 are enriched in polar residues; that stretch reads DSAQADSVENVESY. The span at 23-37 shows a compositional bias: low complexity; the sequence is STETPESAAPAAPRP.

Belongs to the universal ribosomal protein uS9 family.

The protein is Small ribosomal subunit protein uS9 of Leifsonia xyli subsp. xyli (strain CTCB07).